The chain runs to 945 residues: Isoleucine--tRNA ligase (945 aa).

The 'HIGH' region signature appears at Pro66–His76. Glu581 provides a ligand contact to L-isoleucyl-5'-AMP. Residues Lys622–Ser626 carry the 'KMSKS' region motif. An ATP-binding site is contributed by Lys625. 4 residues coordinate Zn(2+): Cys908, Cys911, Cys928, and Cys931.

This sequence belongs to the class-I aminoacyl-tRNA synthetase family. IleS type 1 subfamily. Monomer. Zn(2+) serves as cofactor.

Its subcellular location is the cytoplasm. It catalyses the reaction tRNA(Ile) + L-isoleucine + ATP = L-isoleucyl-tRNA(Ile) + AMP + diphosphate. In terms of biological role, catalyzes the attachment of isoleucine to tRNA(Ile). As IleRS can inadvertently accommodate and process structurally similar amino acids such as valine, to avoid such errors it has two additional distinct tRNA(Ile)-dependent editing activities. One activity is designated as 'pretransfer' editing and involves the hydrolysis of activated Val-AMP. The other activity is designated 'posttransfer' editing and involves deacylation of mischarged Val-tRNA(Ile). This is Isoleucine--tRNA ligase from Paraburkholderia xenovorans (strain LB400).